We begin with the raw amino-acid sequence, 177 residues long: Thymidine kinase (177 aa).

11–18 (GPMFSGKS) is a binding site for ATP. Glutamate 83 serves as the catalytic Proton acceptor. Phenylalanine 113 provides a ligand contact to substrate. Zn(2+) contacts are provided by cysteine 138 and cysteine 141. 157–161 (IEIIG) lines the substrate pocket. Residues cysteine 170 and cysteine 173 each contribute to the Zn(2+) site.

Belongs to the thymidine kinase family. Homotetramer. Two molecules of substrate bind to each enzyme tetramer.

It carries out the reaction thymidine + ATP = dTMP + ADP + H(+). Phosphorylates thymidine and thymidine analogs, such as azidothymidine (AZT). Part of the salvage pathway for pyrimidine deoxyribonucleotide synthesis. In Vaccinia virus (strain Copenhagen) (VACV), this protein is Thymidine kinase (OPG101).